Here is a 176-residue protein sequence, read N- to C-terminus: Disulfide bond formation protein B (176 aa).

Over 1–14 (MMRSLNRCSKHRAA) the chain is Cytoplasmic. Residues 15-31 (WLLLALTTFSLELVALY) traverse the membrane as a helical segment. Topologically, residues 32–49 (FQHVMLLKPCVLCVYQRC) are periplasmic. An intrachain disulfide couples Cys-41 to Cys-44. Residues 50 to 65 (ALYGVVAAGLVGAIAP) form a helical membrane-spanning segment. At 66-71 (ATPLRF) the chain is on the cytoplasmic side. The chain crosses the membrane as a helical span at residues 72 to 89 (SGLAIWLYSAWEGLQLAM). Topologically, residues 90–144 (KHTDIQLHPSPFVTCDFFVSFPAWLPLDKWLPSVFSASGDCAVRQWHFLSLEMPQ) are periplasmic. Residues Cys-104 and Cys-130 are joined by a disulfide bond. The helical transmembrane segment at 145-163 (WMIVIFGAYLAVAVLILLA) threads the bilayer. Topologically, residues 164 to 176 (QFFPPRKRDLFSR) are cytoplasmic.

The protein belongs to the DsbB family.

It is found in the cell inner membrane. Its function is as follows. Required for disulfide bond formation in some periplasmic proteins. Acts by oxidizing the DsbA protein. This is Disulfide bond formation protein B from Sodalis glossinidius (strain morsitans).